The sequence spans 90 residues: Small ribosomal subunit protein bS16 (90 aa).

This sequence belongs to the bacterial ribosomal protein bS16 family.

In Bacillus velezensis (strain DSM 23117 / BGSC 10A6 / LMG 26770 / FZB42) (Bacillus amyloliquefaciens subsp. plantarum), this protein is Small ribosomal subunit protein bS16.